The chain runs to 142 residues: Neuritin (142 aa).

Positions 1–27 (MGLKLNGRYISLILAVQIAYLVQAVRA) are cleaved as a signal peptide. Gly-116 is lipidated: GPI-anchor amidated glycine. A propeptide spans 117–142 (AAGPLLPALPVLLVSLSAALATWLSF) (removed in mature form).

It belongs to the neuritin family. Component of the outer core of AMPAR complex. AMPAR complex consists of an inner core made of 4 pore-forming GluA/GRIA proteins (GRIA1, GRIA2, GRIA3 and GRIA4) and 4 major auxiliary subunits arranged in a twofold symmetry. One of the two pairs of distinct binding sites is occupied either by CNIH2, CNIH3 or CACNG2, CACNG3. The other harbors CACNG2, CACNG3, CACNG4, CACNG8 or GSG1L. This inner core of AMPAR complex is complemented by outer core constituents binding directly to the GluA/GRIA proteins at sites distinct from the interaction sites of the inner core constituents. Outer core constituents include at least PRRT1, PRRT2, CKAMP44/SHISA9, FRRS1L and NRN1. The proteins of the inner and outer core serve as a platform for other, more peripherally associated AMPAR constituents. Alone or in combination, these auxiliary subunits control the gating and pharmacology of the AMPAR complex and profoundly impact their biogenesis and protein processing.

It is found in the cell membrane. Its subcellular location is the synapse. Promotes neurite outgrowth and especially branching of neuritic processes in primary hippocampal and cortical cells. The sequence is that of Neuritin (NRN1) from Bos taurus (Bovine).